The primary structure comprises 703 residues: MSVDERGLAADERGLAADEVGLAADERGRAAELARELEEHAYRYYVLDKPTVADAEYDALMRELEAIEERHPELRTPDSPTQKVAGSYSTLFTPVEHLERLLSLDNVFTDEEFHAWAARAAREQPVTAWLCELKIDGLAVDLVYEGGRLVRAATRGDGRTGEDITPNVRTLASVPSRLRGPAVPELLEVRGEVFFPTERFTELNAALVEAGKAPFANPRNAAAGSLRQKDPRVTASRPLDMIVHGLGAHQGFDVASQSGAYARLAELGLPVSARHEVLASVEDVLAFVRRWGEHRHDVEHEIDGVVVKVDDFGQQRRLGATSKAPRWAVAFKYPPEEVTTRLRDIQVNVGRTGRVTPFGVLEPVKVAGSTVAMATLHNIDEVGRKGVLIGDTVVLRKAGDVIPEIVSPVVDLRDGSERAFVMPTHCPECGTQLVRPEGEVDIRCPNTVSCPAQLRESVFHLASRGALDIDGLGYETATVLLAEGRIHDIGDVFHLAPESFEGLRGFADKKIEQILRGLEAARDRPLWRLLVGLSIRHVGPTAARGLARELRSLDAIATAPAERLAAVDGVGPKIADAVVDWFADPRHRDIVARIASGGVRLADEGAGEGPGPLDGVVVVITGTLDGWSRDTATEAVQSRGGKVTGSVSKKTTFVVAGADPGASKYDKARTLKIPLLDEAGFAVLLRDGADAARALAVPEEVDG.

NAD(+) contacts are provided by residues 54–58 (DAEYD), 103–104 (SL), and Glu132. Residue Lys134 is the N6-AMP-lysine intermediate of the active site. Residues Arg155, Glu192, Lys308, and Lys332 each contribute to the NAD(+) site. Zn(2+) contacts are provided by Cys426, Cys429, Cys444, and Cys450. Residues 608-698 (EGPGPLDGVV…ADAARALAVP (91 aa)) form the BRCT domain.

It belongs to the NAD-dependent DNA ligase family. LigA subfamily. It depends on Mg(2+) as a cofactor. The cofactor is Mn(2+).

It catalyses the reaction NAD(+) + (deoxyribonucleotide)n-3'-hydroxyl + 5'-phospho-(deoxyribonucleotide)m = (deoxyribonucleotide)n+m + AMP + beta-nicotinamide D-nucleotide.. Its function is as follows. DNA ligase that catalyzes the formation of phosphodiester linkages between 5'-phosphoryl and 3'-hydroxyl groups in double-stranded DNA using NAD as a coenzyme and as the energy source for the reaction. It is essential for DNA replication and repair of damaged DNA. The sequence is that of DNA ligase from Parafrankia sp. (strain EAN1pec).